The chain runs to 384 residues: Aurora kinase (384 aa).

2 stretches are compositionally biased toward polar residues: residues M1–N12 and S19–L29. Positions M1 to V100 are disordered. Low complexity predominate over residues Q30–S99. In terms of domain architecture, Protein kinase spans F110–I360. Residues L116 to V124 and K139 each bind ATP. Catalysis depends on D233, which acts as the Proton acceptor.

This sequence belongs to the protein kinase superfamily. Ser/Thr protein kinase family. Aurora subfamily. In terms of assembly, interacts with icpA. Forms a complex at the central spindle.

The protein resides in the cytoplasm. The protein localises to the chromosome. It localises to the centromere. It is found in the cytoskeleton. Its subcellular location is the spindle pole. The protein resides in the cleavage furrow. The protein localises to the cell projection. It localises to the neuron projection. The enzyme catalyses L-seryl-[protein] + ATP = O-phospho-L-seryl-[protein] + ADP + H(+). It carries out the reaction L-threonyl-[protein] + ATP = O-phospho-L-threonyl-[protein] + ADP + H(+). Its function is as follows. Part of a chromosomal passenger complex. The sequence is that of Aurora kinase (aurK) from Dictyostelium discoideum (Social amoeba).